Consider the following 233-residue polypeptide: MFKGILLCVLFAVLSANPLSQPEGFADEERDVRGLASLLGKALKATLKIGTHFLGGAPQQREANDERRFADGQQDYTGWMDFGRRDGQQDYTGWMDFGRRDDEDDVHERDVRGFGSFLGKALKAALKIGANALGGAPQQREANDERRFADGQQDYTGWMDFGRRDDEDDVNERDVRGFGSFLGKALKAALKIGANALGGSPQQREANDERRFADGQQDYTGWMDFGRRNGEDD.

The first 26 residues, 1 to 26, serve as a signal peptide directing secretion; sequence MFKGILLCVLFAVLSANPLSQPEGFA. Residues 27–72 constitute a propeptide that is removed on maturation; that stretch reads DEERDVRGLASLLGKALKATLKIGTHFLGGAPQQREANDERRFADG. Glutamine 73 is subject to Pyrrolidone carboxylic acid. The residue at position 76 (tyrosine 76) is a Sulfotyrosine. Phenylalanine 82 bears the Phenylalanine amide mark. Positions 86–87 are excised as a propeptide; sequence DG. A Pyrrolidone carboxylic acid modification is found at glutamine 88. The residue at position 91 (tyrosine 91) is a Sulfotyrosine. The residue at position 97 (phenylalanine 97) is a Phenylalanine amide. A propeptide spanning residues 101-151 is cleaved from the precursor; that stretch reads DDEDDVHERDVRGFGSFLGKALKAALKIGANALGGAPQQREANDERRFADG. Glutamine 152 carries the pyrrolidone carboxylic acid modification. A Sulfotyrosine modification is found at tyrosine 155. Phenylalanine 161 carries the post-translational modification Phenylalanine amide. Residues 165–215 constitute a propeptide that is removed on maturation; the sequence is DDEDDVNERDVRGFGSFLGKALKAALKIGANALGGSPQQREANDERRFADG. Residues 197 to 233 form a disordered region; sequence LGGSPQQREANDERRFADGQQDYTGWMDFGRRNGEDD. Pyrrolidone carboxylic acid is present on glutamine 216. Tyrosine 219 is subject to Sulfotyrosine. Phenylalanine amide is present on phenylalanine 225. The propeptide occupies 229–233; the sequence is NGEDD.

Belongs to the gastrin/cholecystokinin family. As to expression, expressed by the skin glands.

The protein localises to the secreted. In terms of biological role, the pharmacological activities of caerulein are quite similar to the physiological activities of gastrin and related peptides. The chain is Preprocaerulein type-4 from Xenopus laevis (African clawed frog).